We begin with the raw amino-acid sequence, 343 residues long: Heat-inducible transcription repressor HrcA (343 aa).

The protein belongs to the HrcA family.

Negative regulator of class I heat shock genes (grpE-dnaK-dnaJ and groELS operons). Prevents heat-shock induction of these operons. This chain is Heat-inducible transcription repressor HrcA, found in Thermoanaerobacter sp. (strain X514).